The sequence spans 203 residues: ATP phosphoribosyltransferase (203 aa).

This sequence belongs to the ATP phosphoribosyltransferase family. Short subfamily. In terms of assembly, heteromultimer composed of HisG and HisZ subunits.

It localises to the cytoplasm. It catalyses the reaction 1-(5-phospho-beta-D-ribosyl)-ATP + diphosphate = 5-phospho-alpha-D-ribose 1-diphosphate + ATP. It participates in amino-acid biosynthesis; L-histidine biosynthesis; L-histidine from 5-phospho-alpha-D-ribose 1-diphosphate: step 1/9. Catalyzes the condensation of ATP and 5-phosphoribose 1-diphosphate to form N'-(5'-phosphoribosyl)-ATP (PR-ATP). Has a crucial role in the pathway because the rate of histidine biosynthesis seems to be controlled primarily by regulation of HisG enzymatic activity. This Campylobacter fetus subsp. fetus (strain 82-40) protein is ATP phosphoribosyltransferase.